The chain runs to 460 residues: V-type ATP synthase beta chain (460 aa).

Belongs to the ATPase alpha/beta chains family.

Functionally, produces ATP from ADP in the presence of a proton gradient across the membrane. The V-type beta chain is a regulatory subunit. The chain is V-type ATP synthase beta chain from Clostridium perfringens (strain ATCC 13124 / DSM 756 / JCM 1290 / NCIMB 6125 / NCTC 8237 / Type A).